The sequence spans 241 residues: Ashwin (241 aa).

Disordered stretches follow at residues 1 to 21, 82 to 102, and 212 to 241; these read MAAQ…SARS, KMME…SVTA, and KRSV…CTWP. Residues 11 to 21 are compositionally biased toward basic and acidic residues; it reads GGKEERVSARS.

Belongs to the ashwin family.

It localises to the nucleus. The chain is Ashwin from Gallus gallus (Chicken).